We begin with the raw amino-acid sequence, 1447 residues long: MIDPSSSEEEGEDDAVPNVSSKGRLTNTTKGTSAVSIIGGSAGSVVGSNIPVSGSNTDLIGNQRQSNISSICNRNDVGNISVAALGSTSNKIEQICGNRADTGNLEVPSNGIPSGISQETLNQSVGSSRANSLPRPLSPSPSLTSEKHETAEPHGKHEREEEERKRRIQLYVFISRCISYPFNAKQPTDMTKRQTKISKQQLEIITQRFQAFLKGETQIMADEAFQNAVQSYHDVFLKSERVLKMVQSGASSQHDFREVFRNNIEKRVRSLPEIDGLSKETVLTSWMAKFDIILKGTGEEDSKRPSRMQQSLNSELILSKEQLYDMFQQILLVKKFEHQILFNALMLDSADEQAAAIRRELDGRMQRVGEMEKNRKLMPKFVLKEMESLYVEELKSSINLLMANLESLPVSKGNMDSKYGLQKLKRYNHSTPSFLKLILRSHGSLSKLEGDSEDGSTQLTKLDVVLTFQLEVIVMEVENGEKLQTDQAEASKPMWDTQGDFTTTHPLPVVKVKLYTENPGMLALEDKELGKVTLKPTPLSSKSPEWHRMIVPKNLPDQDIRIKIACRLDKPLNMKHCGYLYAIGKSVWKKWKRRYFVLVQVSQYTFAMCSYKEKKSEPSEMMQLDGYTVDYIEAASANLMFGIDLNGGRYFFNAVREGDSISFACDDENECSLWVMAMYRATGQSHKPTPPITQDKNSAMSKIQGDADKARKHGMEDFISTDPCTFDHATLFKTLQNLTLEYRLNDPYASLGWFSPGQVFVLDEYCARYGVRGCYRHLCYLSDLLDRAEKQHMIDPTLIHYSFAFCASHVHGNRPDGVGSITHEEKEKFSEIKERLRQLLEFQITNFRYCFPFGRPEGALKATLSLLERVLMKDIVTPVPPEEVRQMIKKSLETAALVNYTRLSNKAKIDEDLRGDVIVPAPKKLEDLIHLAELCVDLLQQNEEHYGEAFAWFSDLLVEHAEIFWSLFAVDMDRVLSEQAPDTWDSFPLFQILNDYLRTDDNLRNGRFHQHLRDTFAPLVVRYVDLMESSIAQSIHKGFEKERWESKGINAALNPAALNNAAQALNTAALNPSMILCGKKDQVNFYVPKLPKQSNSTAANDEMRNGCATSEDLFWKLDALQSFIRDLHWPDAEFRQHLEQRLKMMAVDMIEQCIQRTDSSFQSWLKKNIAFISTDYILPSEMCAMVNVILDAKNQSFKLTTIDGIDLYKFHAKIDDQIDKANVAMTQGLSGKLMSVLESTLSKLARYDEGSLIGSILSFTNVSSSGKDLGQGYVNFFRNNMDQVRGKIADDLWTLHFFEQWYSQQINMLCNWLSERVDHALHYAQVASISHIIKKIYSDFELQGVLEDKLNSKAYQAVAQRMATEEATCALTMPDACEDEPCDEIREGEEEDNGDESTSNIPRGLPKPKVAAAQAAAVTNVVAGRVGNLLGKGIGGLSSKLGSGSWF.

The span at 1–15 (MIDPSSSEEEGEDDA) shows a compositional bias: acidic residues. Disordered stretches follow at residues 1–35 (MIDP…TSAV) and 101–163 (DTGN…EEEE). Polar residues-rich tracts occupy residues 18-32 (NVSS…TKGT) and 111-126 (GIPS…QSVG). Residues 127–144 (SSRANSLPRPLSPSPSLT) are compositionally biased toward low complexity. Over residues 145–163 (SEKHETAEPHGKHEREEEE) the composition is skewed to basic and acidic residues. Residues 417–547 (SKYGLQKLKR…PLSSKSPEWH (131 aa)) enclose the C2 domain. One can recognise a PH domain in the interval 573-683 (NMKHCGYLYA…WVMAMYRATG (111 aa)). The MHD1 domain occupies 970–1157 (VDMDRVLSEQ…DMIEQCIQRT (188 aa)). A compositionally biased stretch (acidic residues) spans 1386-1395 (REGEEEDNGD). The segment at 1386 to 1406 (REGEEEDNGDESTSNIPRGLP) is disordered.

As to expression, restricted to the nervous system at all stages of development and highly localized at synapses (at protein level).

The protein resides in the cytoplasmic vesicle membrane. Its subcellular location is the synapse. Functionally, calcium-binding protein involved in exocytosis of vesicles filled with neurotransmitters and neuropeptides. May specifically mediate the Ca(2+)-dependent exocytosis of large dense-core vesicles (DCVs) and other dense-core vesicles. However, it probably also participates in small clear synaptic vesicles (SVs) exocytosis and it is unclear whether its function is related to Ca(2+) triggering. The chain is Calcium-dependent secretion activator from Drosophila melanogaster (Fruit fly).